The sequence spans 111 residues: WAP four-disulfide core domain protein 12 (111 aa).

The first 23 residues, 1-23 (MGSSSFLVLMVSLALVTLVAAEG), serve as a signal peptide directing secretion. One can recognise a WAP domain in the interval 27–74 (NIEKPGVCPADNIRCIKSDPPQCHTDQDCQGIRKCCYLHCGFKCVIPV). 4 disulfide bridges follow: C34-C62, C41-C66, C49-C61, and C55-C70. Residues 80-111 (GGNKDEDVSRPCPEPGWEAKPPGVFSTRCPQK) are disordered.

Its subcellular location is the secreted. In terms of biological role, antibacterial protein. Putative acid-stable proteinase inhibitor. The polypeptide is WAP four-disulfide core domain protein 12 (WFDC12) (Callithrix jacchus (White-tufted-ear marmoset)).